Reading from the N-terminus, the 253-residue chain is Triosephosphate isomerase (253 aa).

Residue Asn9–Lys11 participates in substrate binding. His97 (electrophile) is an active-site residue. Glu169 acts as the Proton acceptor in catalysis. Substrate-binding positions include Gly175, Ser215, and Gly236 to Gly237.

The protein belongs to the triosephosphate isomerase family. In terms of assembly, homodimer.

It localises to the cytoplasm. The enzyme catalyses D-glyceraldehyde 3-phosphate = dihydroxyacetone phosphate. It participates in carbohydrate biosynthesis; gluconeogenesis. The protein operates within carbohydrate degradation; glycolysis; D-glyceraldehyde 3-phosphate from glycerone phosphate: step 1/1. Its function is as follows. Involved in the gluconeogenesis. Catalyzes stereospecifically the conversion of dihydroxyacetone phosphate (DHAP) to D-glyceraldehyde-3-phosphate (G3P). This Staphylococcus epidermidis (strain ATCC 35984 / DSM 28319 / BCRC 17069 / CCUG 31568 / BM 3577 / RP62A) protein is Triosephosphate isomerase.